The chain runs to 843 residues: MTLDMDAVLSDFVRSTGAEPGLARDLLEGKNWDVNAALSDFEQLRQVHAGNLPPSFSEGSGGSRTPEKGFSDREPTRPPRPILQRQDDIVQEKRLSRGISHASSSIVSLARSHVSSNGGGGGSNEHPLEMPICAFQLPDLTVYNEDFRSFIERDLIEQSMLVALEQAGRLNWWVSVDPTSQRLLPLATTGDGNCLLHAASLGMWGFHDRDLMLRKALYALMEKGVEKEALKRRWRWQQTQQNKESGLVYTEDEWQKEWNELIKLASSEPRMHLGTNGANCGGVESSEEPVYESLEEFHVFVLAHVLRRPIVVVADTMLRDSGGEAFAPIPFGGIYLPLEVPASQCHRSPLVLAYDQAHFSALVSMEQKENTKEQAVIPLTDSEYKLLPLHFAVDPGKGWEWGKDDSDNVRLASVILSLEVKLHLLHSYMNVKWIPLSSDAQAPLAQPESPTASAGDEPRSTPESGDSDKESVGSSSTSNEGGRRKEKSKRDREKDKKRADSVANKLGSFGKTLGSKLKKNMGGLMHSKGSKPGGVGTGLGGSSGTETLEKKKKNSLKSWKGGKEEAAGDGPVSEKPPAESVGNGGSKYSQEVMQSLSILRTAMQGEGKFIFVGTLKMGHRHQYQEEMIQRYLSDAEERFLAEQKQKEAERKIMNGGIGGGPPPAKKPEPDAREEQPTGPPAESRAMAFSTGYPGDFTIPRPSGGGVHCQEPRRQLAGGPCVGGLPPYATFPRQCPPGRPYPHQDSIPSLEPGSHSKDGLHRGALLPPPYRVADSYSNGYREPPEPDGWAGGLRGLPPTQTKCKQPNCSFYGHPETNNFCSCCYREELRRREREPDGELLVHRF.

Residues 50 to 88 (GNLPPSFSEGSGGSRTPEKGFSDREPTRPPRPILQRQDD) are disordered. The span at 65-77 (TPEKGFSDREPTR) shows a compositional bias: basic and acidic residues. Residue S100 is modified to Phosphoserine. The TRAF-binding stretch occupies residues 152-401 (ERDLIEQSML…AVDPGKGWEW (250 aa)). Residues 167–440 (AGRLNWWVSV…VKWIPLSSDA (274 aa)) are catalytic. In terms of domain architecture, OTU spans 183 to 365 (LLPLATTGDG…QAHFSALVSM (183 aa)). The interval 187–193 (ATTGDGN) is regulatory loop. Residue D191 is part of the active site. C194 (nucleophile) is an active-site residue. H358 (proton acceptor) is an active-site residue. Disordered regions lie at residues 442–587 (APLA…GGSK) and 652–711 (IMNG…CQEP). 2 stretches are compositionally biased toward basic and acidic residues: residues 456 to 471 (DEPRSTPESGDSDKES) and 488 to 500 (SKRDREKDKKRAD). Phosphoserine occurs at positions 464, 467, and 471. A Nuclear localization signal motif is present at residues 483 to 498 (RRKEKSKRDREKDKKR). Gly residues predominate over residues 531 to 543 (KPGGVGTGLGGSS). The segment covering 665–675 (KKPEPDAREEQ) has biased composition (basic and acidic residues). The residue at position 729 (T729) is a Phosphothreonine. The interval 732 to 792 (RQCPPGRPYP…PEPDGWAGGL (61 aa)) is disordered. Residues 796–831 (PPTQTKCKQPNCSFYGHPETNNFCSCCYREELRRRE) form an A20-type zinc finger. C802, C807, C819, and C822 together coordinate Zn(2+).

The protein belongs to the peptidase C64 family. Interacts with ZAP70 in activated T cells, but not in resting T cells. Interacts with TRAF3. Interacts with TRAF6. Interacts with PARK7, leading to inhibit deubiquitinase activity. Interacts with EGFR, ITCH and NEDD4. Phosphorylated by EGFR. In terms of tissue distribution, widely expressed. Abundant in kidney, heart and fetal liver. Expressed differentially among B-cells at distinct developmental stages. Higher expression seen in primary immature B-cells as compared to the mature cells.

It is found in the cytoplasm. The protein localises to the nucleus. It catalyses the reaction Thiol-dependent hydrolysis of ester, thioester, amide, peptide and isopeptide bonds formed by the C-terminal Gly of ubiquitin (a 76-residue protein attached to proteins as an intracellular targeting signal).. Deubiquitinase activity is inhibited following interaction with PARK7. Negative regulator of the non-canonical NF-kappa-B pathway that acts by mediating deubiquitination of TRAF3, an inhibitor of the NF-kappa-B pathway, thereby acting as a negative regulator of B-cell responses. In response to non-canonical NF-kappa-B stimuli, deubiquitinates 'Lys-48'-linked polyubiquitin chains of TRAF3, preventing TRAF3 proteolysis and over-activation of non-canonical NF-kappa-B. Negatively regulates mucosal immunity against infections. Deubiquitinates ZAP70, and thereby regulates T cell receptor (TCR) signaling that leads to the activation of NF-kappa-B. Plays a role in T cell homeostasis and is required for normal T cell responses, including production of IFNG and IL2. Mediates deubiquitination of EGFR. Has deubiquitinating activity toward 'Lys-11', 'Lys-48' and 'Lys-63'-linked polyubiquitin chains. Has a much higher catalytic rate with 'Lys-11'-linked polyubiquitin chains (in vitro); however the physiological significance of these data are unsure. Hydrolyzes both linear and branched forms of polyubiquitin. Acts as a regulator of mTORC1 and mTORC2 assembly by mediating 'Lys-63'-linked deubiquitination of MLST8, thereby promoting assembly of the mTORC2 complex, while inibiting formation of the mTORC1 complex. This Homo sapiens (Human) protein is OTU domain-containing protein 7B (OTUD7B).